A 119-amino-acid chain; its full sequence is Large ribosomal subunit protein uL14 (119 aa).

Belongs to the universal ribosomal protein uL14 family. In terms of assembly, part of the 50S ribosomal subunit. Forms a cluster with proteins L3 and L19. In the 70S ribosome, L14 and L19 interact and together make contacts with the 16S rRNA in bridges B5 and B8.

Binds to 23S rRNA. Forms part of two intersubunit bridges in the 70S ribosome. The polypeptide is Large ribosomal subunit protein uL14 (Wolbachia pipientis wMel).